The chain runs to 106 residues: Phosphoribosyl-ATP pyrophosphatase (106 aa).

The protein belongs to the PRA-PH family.

The protein resides in the cytoplasm. The catalysed reaction is 1-(5-phospho-beta-D-ribosyl)-ATP + H2O = 1-(5-phospho-beta-D-ribosyl)-5'-AMP + diphosphate + H(+). The protein operates within amino-acid biosynthesis; L-histidine biosynthesis; L-histidine from 5-phospho-alpha-D-ribose 1-diphosphate: step 2/9. This Geotalea daltonii (strain DSM 22248 / JCM 15807 / FRC-32) (Geobacter daltonii) protein is Phosphoribosyl-ATP pyrophosphatase.